The sequence spans 392 residues: SH3 domain-binding protein 5-like (392 aa).

The tract at residues 1–57 is disordered; sequence MADLKKAAGGRETPQGELRSEVVEDEGPRSPVAEEPGGSGSNSSETKLSPREEEELD. Phosphothreonine is present on T13. Over residues 18 to 28 the composition is skewed to basic and acidic residues; sequence LRSEVVEDEGP. S30 and S49 each carry phosphoserine. 2 coiled-coil regions span residues 59–140 and 169–272; these read RIQE…YERA and WQEM…EQIH. A disordered region spans residues 275 to 332; that stretch reads RRGLPPHPLGPRRSSPVGAEAGPEGIEDGDSGIEGAEGGGLEEGSSLGPGPGPDTDTL. A compositionally biased stretch (low complexity) spans 317 to 332; sequence EGSSLGPGPGPDTDTL. Phosphoserine is present on residues S342, S349, S357, S361, and S377. Positions 364-392 are disordered; sequence GQELGAQSRGRRGSDIGVRGGRHQRSVSL. The span at 383–392 shows a compositional bias: basic residues; that stretch reads GGRHQRSVSL.

It belongs to the SH3BP5 family.

In terms of biological role, functions as a guanine nucleotide exchange factor (GEF) for RAB11A. The protein is SH3 domain-binding protein 5-like (Sh3bp5l) of Mus musculus (Mouse).